Here is a 150-residue protein sequence, read N- to C-terminus: MRVLLQRCYEASVRVEGEIISEIAGGLCLLVGFTHSDTEETVEYMAKKIIGLRVFEDESEKMNISLAERGGAILSVSQFTLYADVSRGKRPSFTKSAPGEKAEGLYNLFNNKLSDAGFIVETGVFGAFMDVKIVNNGPVTIMLDSEEMRK.

A Gly-cisPro motif, important for rejection of L-amino acids motif is present at residues 137 to 138; that stretch reads GP.

The protein belongs to the DTD family. Homodimer.

The protein resides in the cytoplasm. The enzyme catalyses glycyl-tRNA(Ala) + H2O = tRNA(Ala) + glycine + H(+). It carries out the reaction a D-aminoacyl-tRNA + H2O = a tRNA + a D-alpha-amino acid + H(+). Its function is as follows. An aminoacyl-tRNA editing enzyme that deacylates mischarged D-aminoacyl-tRNAs. Also deacylates mischarged glycyl-tRNA(Ala), protecting cells against glycine mischarging by AlaRS. Acts via tRNA-based rather than protein-based catalysis; rejects L-amino acids rather than detecting D-amino acids in the active site. By recycling D-aminoacyl-tRNA to D-amino acids and free tRNA molecules, this enzyme counteracts the toxicity associated with the formation of D-aminoacyl-tRNA entities in vivo and helps enforce protein L-homochirality. This Listeria innocua serovar 6a (strain ATCC BAA-680 / CLIP 11262) protein is D-aminoacyl-tRNA deacylase.